The sequence spans 1192 residues: Probable ATP-binding protein BrxC (1192 aa).

This sequence belongs to the BrxC family.

Functionally, BREX systems (bacteriophage exclusion) provide immunity against bacteriophage. A core protein of a type 1 BREX system. This system allows phage adsorption but prevents phage DNA replication, without degradation of the phage DNA. Methylation of bacterial DNA by PglX probably guides self/non-self discrimination. When the brxA-brxB-brxC-pglX and pglZ-brxL operons are transformed into a susceptible B.subtilis strain (BEST7003) they confer resistance to bacteriophages SPbeta, SP16, Zeta, phi3T and SP02 and partial protection to phages SP01 and SP82G (these include lytic and temperate phage). They do not protect against phages phi105, rho10 or rho14. Additionally confers a very slight reduction in efficiency of plasmid transformation. The sequence is that of Probable ATP-binding protein BrxC from Bacillus cereus (strain H3081.97).